Consider the following 377-residue polypeptide: Transmembrane 6 superfamily member 2 (377 aa).

Helical transmembrane passes span 10 to 30 (IAAL…VSAL), 34 to 54 (LWVA…VYSL), 63 to 83 (PLYA…IIAL), 111 to 131 (FICY…AGAI), 140 to 160 (FGLY…TGNI), 170 to 190 (PAFF…MKVF), 219 to 239 (LALV…GLVV), 269 to 289 (MLMY…ALTF), and 332 to 352 (TWGC…LLAY). EXPERA domains lie at 61-186 (YDPL…CWAG) and 217-351 (ADLA…HLLA).

The protein belongs to the TM6SF family. Substantial expression in liver and intestine, whereas all other tissues analyzed show low levels.

It localises to the endoplasmic reticulum membrane. The protein localises to the endoplasmic reticulum-Golgi intermediate compartment membrane. Regulator of liver fat metabolism influencing triglyceride secretion and hepatic lipid droplet content. May function as sterol isomerase. The sequence is that of Transmembrane 6 superfamily member 2 (TM6SF2) from Homo sapiens (Human).